Here is a 628-residue protein sequence, read N- to C-terminus: Propionate--CoA ligase (628 aa).

It belongs to the ATP-dependent AMP-binding enzyme family.

It catalyses the reaction propanoate + ATP + CoA = propanoyl-CoA + AMP + diphosphate. Its pathway is organic acid metabolism; propanoate degradation. In terms of biological role, catalyzes the synthesis of propionyl-CoA from propionate and CoA. Also converts acetate to acetyl-CoA but with a lower specific activity. The chain is Propionate--CoA ligase (prpE) from Escherichia coli (strain K12).